Consider the following 72-residue polypeptide: Large ribosomal subunit protein uL29 (72 aa).

It belongs to the universal ribosomal protein uL29 family.

In Prochlorococcus marinus (strain MIT 9312), this protein is Large ribosomal subunit protein uL29.